We begin with the raw amino-acid sequence, 673 residues long: DNA ligase (673 aa).

NAD(+) is bound by residues 33–37 (DSVYD), 82–83 (SL), and glutamate 117. Catalysis depends on lysine 119, which acts as the N6-AMP-lysine intermediate. The NAD(+) site is built by arginine 140, glutamate 177, lysine 295, and lysine 319. Cysteine 413, cysteine 416, cysteine 431, and cysteine 436 together coordinate Zn(2+). Positions 595–673 (AVSQVLAGKK…EAELLALDPK (79 aa)) constitute a BRCT domain.

Belongs to the NAD-dependent DNA ligase family. LigA subfamily. It depends on Mg(2+) as a cofactor. Mn(2+) is required as a cofactor.

It carries out the reaction NAD(+) + (deoxyribonucleotide)n-3'-hydroxyl + 5'-phospho-(deoxyribonucleotide)m = (deoxyribonucleotide)n+m + AMP + beta-nicotinamide D-nucleotide.. DNA ligase that catalyzes the formation of phosphodiester linkages between 5'-phosphoryl and 3'-hydroxyl groups in double-stranded DNA using NAD as a coenzyme and as the energy source for the reaction. It is essential for DNA replication and repair of damaged DNA. The sequence is that of DNA ligase from Synechococcus sp. (strain JA-3-3Ab) (Cyanobacteria bacterium Yellowstone A-Prime).